Here is a 493-residue protein sequence, read N- to C-terminus: Glutamyl-tRNA(Gln) amidotransferase subunit A (493 aa).

Active-site charge relay system residues include lysine 79 and serine 159. The Acyl-ester intermediate role is filled by serine 183.

Belongs to the amidase family. GatA subfamily. As to quaternary structure, heterotrimer of A, B and C subunits.

The enzyme catalyses L-glutamyl-tRNA(Gln) + L-glutamine + ATP + H2O = L-glutaminyl-tRNA(Gln) + L-glutamate + ADP + phosphate + H(+). Allows the formation of correctly charged Gln-tRNA(Gln) through the transamidation of misacylated Glu-tRNA(Gln) in organisms which lack glutaminyl-tRNA synthetase. The reaction takes place in the presence of glutamine and ATP through an activated gamma-phospho-Glu-tRNA(Gln). This Brucella suis biovar 1 (strain 1330) protein is Glutamyl-tRNA(Gln) amidotransferase subunit A.